The following is a 239-amino-acid chain: Ribonuclease HII (239 aa).

Residues 30-221 (GPVAGVDEVG…VRRLVTAGTP (192 aa)) form the RNase H type-2 domain. Asp36, Glu37, and Asp130 together coordinate a divalent metal cation.

The protein belongs to the RNase HII family. Mn(2+) is required as a cofactor. The cofactor is Mg(2+).

It is found in the cytoplasm. It carries out the reaction Endonucleolytic cleavage to 5'-phosphomonoester.. In terms of biological role, endonuclease that specifically degrades the RNA of RNA-DNA hybrids. The protein is Ribonuclease HII of Mycobacterium sp. (strain JLS).